The chain runs to 800 residues: DNA topoisomerase 4 subunit A (800 aa).

Residues 31-495 enclose the Topo IIA-type catalytic domain; the sequence is LPDVRDGLKP…EIEEIKIDKE (465 aa). Residue Y119 is the O-(5'-phospho-DNA)-tyrosine intermediate of the active site.

Belongs to the type II topoisomerase GyrA/ParC subunit family. ParC type 2 subfamily. Heterotetramer composed of ParC and ParE.

The protein localises to the cell membrane. It carries out the reaction ATP-dependent breakage, passage and rejoining of double-stranded DNA.. Functionally, topoisomerase IV is essential for chromosome segregation. It relaxes supercoiled DNA. Performs the decatenation events required during the replication of a circular DNA molecule. In Staphylococcus aureus (strain MW2), this protein is DNA topoisomerase 4 subunit A.